Consider the following 385-residue polypeptide: Uroporphyrinogen decarboxylase (385 aa).

Residues 53-57 (RQAGR), Asp102, Tyr179, Ser234, and His363 each bind substrate.

It belongs to the uroporphyrinogen decarboxylase family. Homodimer.

It localises to the cytoplasm. The catalysed reaction is uroporphyrinogen III + 4 H(+) = coproporphyrinogen III + 4 CO2. It participates in porphyrin-containing compound metabolism; protoporphyrin-IX biosynthesis; coproporphyrinogen-III from 5-aminolevulinate: step 4/4. Catalyzes the decarboxylation of four acetate groups of uroporphyrinogen-III to yield coproporphyrinogen-III. The chain is Uroporphyrinogen decarboxylase from Tropheryma whipplei (strain TW08/27) (Whipple's bacillus).